The following is a 279-amino-acid chain: 3-methyl-2-oxobutanoate hydroxymethyltransferase (279 aa).

Mg(2+)-binding residues include Asp-53 and Asp-92. 3-methyl-2-oxobutanoate contacts are provided by residues 53–54 (DS), Asp-92, and Lys-122. Glu-124 serves as a coordination point for Mg(2+). Glu-191 acts as the Proton acceptor in catalysis.

The protein belongs to the PanB family. Homodecamer; pentamer of dimers. The cofactor is Mg(2+).

Its subcellular location is the cytoplasm. The catalysed reaction is 3-methyl-2-oxobutanoate + (6R)-5,10-methylene-5,6,7,8-tetrahydrofolate + H2O = 2-dehydropantoate + (6S)-5,6,7,8-tetrahydrofolate. It participates in cofactor biosynthesis; (R)-pantothenate biosynthesis; (R)-pantoate from 3-methyl-2-oxobutanoate: step 1/2. Its function is as follows. Catalyzes the reversible reaction in which hydroxymethyl group from 5,10-methylenetetrahydrofolate is transferred onto alpha-ketoisovalerate to form ketopantoate. The sequence is that of 3-methyl-2-oxobutanoate hydroxymethyltransferase from Maricaulis maris (strain MCS10) (Caulobacter maris).